The sequence spans 234 residues: Coiled-coil domain-containing protein 194 (234 aa).

Residues 1 to 42 (MAEPGPEPGRAWRVLALCGVAVFLAAAAAGGALVAWNLAASA) form the signal peptide. Disordered regions lie at residues 44 to 67 (RGPR…PGVD) and 187 to 234 (VLEA…RARG). Positions 66–163 (VDDLRRRLAE…TRRLDEALRR (98 aa)) form a coiled coil. The span at 187-196 (VLEAEMSPQR) shows a compositional bias: low complexity. Basic residues predominate over residues 197-217 (RVPRPRPRSGSRPRPSPRSRS).

The polypeptide is Coiled-coil domain-containing protein 194 (Homo sapiens (Human)).